A 127-amino-acid chain; its full sequence is Large ribosomal subunit protein bL12 (127 aa).

This sequence belongs to the bacterial ribosomal protein bL12 family. In terms of assembly, homodimer. Part of the ribosomal stalk of the 50S ribosomal subunit. Forms a multimeric L10(L12)X complex, where L10 forms an elongated spine to which 2 to 4 L12 dimers bind in a sequential fashion. Binds GTP-bound translation factors.

Forms part of the ribosomal stalk which helps the ribosome interact with GTP-bound translation factors. Is thus essential for accurate translation. In Streptomyces avermitilis (strain ATCC 31267 / DSM 46492 / JCM 5070 / NBRC 14893 / NCIMB 12804 / NRRL 8165 / MA-4680), this protein is Large ribosomal subunit protein bL12.